Consider the following 324-residue polypeptide: S-methyl-5'-thioadenosine phosphorylase (324 aa).

Residues serine 14, 57 to 58, and 90 to 91 contribute to the phosphate site; these read RH and SA. Substrate is bound at residue methionine 196. A phosphate-binding site is contributed by serine 197. Residue 220-222 coordinates substrate; sequence DYD.

Belongs to the PNP/MTAP phosphorylase family. MTAP subfamily. As to quaternary structure, homotrimer.

The protein resides in the cytoplasm. It is found in the nucleus. It carries out the reaction S-methyl-5'-thioadenosine + phosphate = 5-(methylsulfanyl)-alpha-D-ribose 1-phosphate + adenine. Its pathway is amino-acid biosynthesis; L-methionine biosynthesis via salvage pathway; S-methyl-5-thio-alpha-D-ribose 1-phosphate from S-methyl-5'-thioadenosine (phosphorylase route): step 1/1. In terms of biological role, catalyzes the reversible phosphorylation of S-methyl-5'-thioadenosine (MTA) to adenine and 5-methylthioribose-1-phosphate. Involved in the breakdown of MTA, a major by-product of polyamine biosynthesis. Responsible for the first step in the methionine salvage pathway after MTA has been generated from S-adenosylmethionine. Has broad substrate specificity with 6-aminopurine nucleosides as preferred substrates. This Coprinopsis cinerea (strain Okayama-7 / 130 / ATCC MYA-4618 / FGSC 9003) (Inky cap fungus) protein is S-methyl-5'-thioadenosine phosphorylase.